The chain runs to 183 residues: Adenine phosphoribosyltransferase (183 aa).

This sequence belongs to the purine/pyrimidine phosphoribosyltransferase family. Homodimer.

It localises to the cytoplasm. The catalysed reaction is AMP + diphosphate = 5-phospho-alpha-D-ribose 1-diphosphate + adenine. Its pathway is purine metabolism; AMP biosynthesis via salvage pathway; AMP from adenine: step 1/1. In terms of biological role, catalyzes a salvage reaction resulting in the formation of AMP, that is energically less costly than de novo synthesis. This Cronobacter sakazakii (strain ATCC BAA-894) (Enterobacter sakazakii) protein is Adenine phosphoribosyltransferase.